The primary structure comprises 364 residues: Coproporphyrin III ferrochelatase (364 aa).

Positions 29 and 118 each coordinate Fe-coproporphyrin III. Residues histidine 169 and glutamate 250 each contribute to the Fe(2+) site.

The protein belongs to the ferrochelatase family.

It localises to the cytoplasm. It carries out the reaction Fe-coproporphyrin III + 2 H(+) = coproporphyrin III + Fe(2+). The protein operates within porphyrin-containing compound metabolism; protoheme biosynthesis. Its function is as follows. Involved in coproporphyrin-dependent heme b biosynthesis. Catalyzes the insertion of ferrous iron into coproporphyrin III to form Fe-coproporphyrin III. The protein is Coproporphyrin III ferrochelatase of Streptococcus pneumoniae (strain Hungary19A-6).